The following is a 359-amino-acid chain: E2F transcription factor-like E2FD (359 aa).

2 DNA-binding regions span residues 13 to 78 (RKDK…SWKG) and 138 to 217 (RKER…RWLG). Disordered regions lie at residues 255-274 (RNKSGCSKEDSKRNGNQNTS) and 288-313 (DVKNFASGSSTPAGTSESNDMGNNIR). The span at 293-309 (ASGSSTPAGTSESNDMG) shows a compositional bias: polar residues.

This sequence belongs to the E2F/DP family. Monomer. No interactions with DPA or E2FA. As to expression, preferentially expressed in proliferating tissues. Highly expressed in young stalk and young flowers. Lower expression in young leaves and mature flowers. Detected in cotyledonary vascular tissues, the shoot apical meristem, the base of trichomes, the fully developed stomata, the central root cylinder and in the columella of lateral roots but not in the primary root tips or in the leaf epidermal cells.

It is found in the nucleus. Functionally, inhibitor of E2F-dependent regulation of gene expression. Binds specifically the E2 recognition site as a monomer without interacting with DP proteins. May be up-regulating E2FA and down-regulating repressors of cell cycle progression. Promotes cell proliferation and represses cell elongation. Regulated by proteolysis via a ubiquitin-proteasome pathway. The protein is E2F transcription factor-like E2FD (E2FD) of Arabidopsis thaliana (Mouse-ear cress).